The sequence spans 1297 residues: Phosphoribosylformylglycinamidine synthase (1297 aa).

ATP contacts are provided by residues 307 to 318 and A678; that span reads GASTGSGGEIRD. Positions 718, 722, and 886 each coordinate Mg(2+). The Glutamine amidotransferase type-1 domain occupies 1044 to 1297; that stretch reads MAILREQGVN…MFQNARKNLA (254 aa). C1137 (nucleophile) is an active-site residue. Catalysis depends on residues H1262 and E1264.

The protein in the N-terminal section; belongs to the FGAMS family. In terms of assembly, monomer.

It localises to the cytoplasm. The catalysed reaction is N(2)-formyl-N(1)-(5-phospho-beta-D-ribosyl)glycinamide + L-glutamine + ATP + H2O = 2-formamido-N(1)-(5-O-phospho-beta-D-ribosyl)acetamidine + L-glutamate + ADP + phosphate + H(+). It participates in purine metabolism; IMP biosynthesis via de novo pathway; 5-amino-1-(5-phospho-D-ribosyl)imidazole from N(2)-formyl-N(1)-(5-phospho-D-ribosyl)glycinamide: step 1/2. In terms of biological role, phosphoribosylformylglycinamidine synthase involved in the purines biosynthetic pathway. Catalyzes the ATP-dependent conversion of formylglycinamide ribonucleotide (FGAR) and glutamine to yield formylglycinamidine ribonucleotide (FGAM) and glutamate. The sequence is that of Phosphoribosylformylglycinamidine synthase from Vibrio vulnificus (strain YJ016).